The following is a 400-amino-acid chain: Formate-dependent phosphoribosylglycinamide formyltransferase (400 aa).

Residues 22-23 and Glu82 contribute to the N(1)-(5-phospho-beta-D-ribosyl)glycinamide site; that span reads EL. ATP-binding positions include Arg115, Lys156, 161-166, 196-199, and Glu204; these read SSGKGQ and EGFI. Positions 120 to 309 constitute an ATP-grasp domain; the sequence is RLAAETLGLP…EFALHARAIL (190 aa). Residues Glu268 and Glu280 each contribute to the Mg(2+) site. Residues Asp287, Lys361, and 368 to 369 each bind N(1)-(5-phospho-beta-D-ribosyl)glycinamide; that span reads RR.

This sequence belongs to the PurK/PurT family. Homodimer.

It carries out the reaction N(1)-(5-phospho-beta-D-ribosyl)glycinamide + formate + ATP = N(2)-formyl-N(1)-(5-phospho-beta-D-ribosyl)glycinamide + ADP + phosphate + H(+). The protein operates within purine metabolism; IMP biosynthesis via de novo pathway; N(2)-formyl-N(1)-(5-phospho-D-ribosyl)glycinamide from N(1)-(5-phospho-D-ribosyl)glycinamide (formate route): step 1/1. Involved in the de novo purine biosynthesis. Catalyzes the transfer of formate to 5-phospho-ribosyl-glycinamide (GAR), producing 5-phospho-ribosyl-N-formylglycinamide (FGAR). Formate is provided by PurU via hydrolysis of 10-formyl-tetrahydrofolate. This is Formate-dependent phosphoribosylglycinamide formyltransferase from Xanthomonas oryzae pv. oryzae (strain PXO99A).